A 45-amino-acid polypeptide reads, in one-letter code: uncharacterized protein (45 aa).

This is an uncharacterized protein from Escherichia coli (Bacteriophage T4).